The primary structure comprises 712 residues: MSQEKQVFSIDLAGRQLTVETGQLAKQANGAVLVRYGDTAVLSTATASKEAKNVDFFPLTVNYEERLYAVGKIPGGFIKREGRPSEKAILASRLIDRPIRPLFADGFRNEVQVVSIVMSVDQDCSSEMAAMLGSSLALSISDIPFEGPIAGATVGRINGEFVINPTVEQQEQSDIHLVVAGTKDAINMVEAGADQVPEETMLEAIMFGHDEIKRLIAFQEEIVQAVGKEKSEVKLYEVDADLNQAVREMAEKDMHSAIQVHEKHAREDAINEVKKRVIEHYEAQEADADTLGQVNEILYKIVKEEVRRLITVEKIRPDGRKGDEIRPLASEVGILSRTHGSGLFTRGQTQALSICTLGALGDVQILDGLGVEESKRFMHHYNFPSFSVGETRPMRGPGRREIGHGALGERALEPVIPSEKDFPYTVRLVSEVLESNGSTSQASICGSTLAMMDAGVPLKAPVAGIAMGLVKSGEHYTILTDIQGMEDHLGDMDFKVAGTAHGVTALQMDIKIDGLSREILEEALQQAKVGRMHILDHMLSVIAEPRTELSAYAPKIITMTINPDKIRDVIGPSGKQINKIIEETGVKIDIEQDGTVFISSINQEMNDKAKKIIEDIVREVQVGEIYEGKVKRVEKFGAFVELFSGKDGLVHISELALERVGKVEDVVKIGDVITVKVIEIDKQGRVNLSRKVLLKEEQEKEAAKEENKQEQQ.

Positions 487 and 493 each coordinate Mg(2+). The KH domain maps to 554–613; that stretch reads PKIITMTINPDKIRDVIGPSGKQINKIIEETGVKIDIEQDGTVFISSINQEMNDKAKKII. An S1 motif domain is found at 623 to 691; that stretch reads GEIYEGKVKR…KQGRVNLSRK (69 aa).

Belongs to the polyribonucleotide nucleotidyltransferase family. Requires Mg(2+) as cofactor.

The protein localises to the cytoplasm. It catalyses the reaction RNA(n+1) + phosphate = RNA(n) + a ribonucleoside 5'-diphosphate. In terms of biological role, involved in mRNA degradation. Catalyzes the phosphorolysis of single-stranded polyribonucleotides processively in the 3'- to 5'-direction. The polypeptide is Polyribonucleotide nucleotidyltransferase (Bacillus cereus (strain AH187)).